A 636-amino-acid chain; its full sequence is C-terminal binding protein AN (636 aa).

A disordered region spans residues 1-21 (MSKIRSSATMPHRDQPSPASP). NAD(+) contacts are provided by residues S91, 147 to 148 (WL), 169 to 174 (VGRSVS), D193, 231 to 237 (CALTNDT), 258 to 260 (TGS), D284, and 307 to 311 (RSADY). Residues 341–489 (VSDEEVEESE…PLEVMQESSP (149 aa)) are disordered. Over residues 342 to 357 (SDEEVEESEASEEEEQ) the composition is skewed to acidic residues. Over residues 369–384 (ESTSRQQGESTLTSTE) the composition is skewed to polar residues. A compositionally biased stretch (basic and acidic residues) spans 385–395 (IVRREASELKE). Polar residues predominate over residues 398-409 (SPGQQHVSQNTA). Positions 417-429 (SRSGKKAKKRHSQ) are enriched in basic residues. The segment covering 430–445 (QKYMQKTDGSSGLNEE) has biased composition (polar residues). Over residues 470–480 (SPEDSRSRKTP) the composition is skewed to basic and acidic residues.

It belongs to the D-isomer specific 2-hydroxyacid dehydrogenase family. Plant AN subfamily. As to quaternary structure, homodimer. Interacts with KCBP and SUB (via intra-cellular domain); AN is not required for the correct subcellular localization and recycling of SUB. Binds to SOKs proteins polymers (e.g. SOK1, SOK2, SOK3 and SOK4). Interacts with IPGA1 on microtubule upon mechanical stress to regulate microtubule organization. The cofactor is NAD(+). As to expression, expressed in cotyledons, leaves, roots, stems and floral buds.

The protein resides in the cytoplasm. The protein localises to the golgi apparatus. It localises to the trans-Golgi network. Its subcellular location is the cytoskeleton. Functionally, involved in controlling the equilibrium between tubular and stacked structures in the Golgi complex. Required for cortical microtubules (MTs) arrangement that confers cell shape. Cooperatively with IPGA1, negatively regulates cortical microtubules (CMTs) organization in response to mechanical stress and modulates pavement cells morphogenesis leading to puzzle shape, probably in an AAA1/KTN1-dependent manner. Regulates the width of leaves by controlling the polar elongation of leaf cells. Involved in the regulation of trichome branching. Seems to not be able to regulate gene transcription. Regulates epidermal cell divisions and elongation in a non-cell-autonomous manner (regulated by subepidermal cells), but regulates epidermal cell polarity, shape, trichome branching and elongation in a cell-autonomous manner. Negatively regulates growth in the petiole elongation. Prevents lipid peroxidation as a result of abiotic stress response. Is involved in the SUB-dependent signaling mechanism and may act in a membrane trafficking event around the trans-Golgi network. This chain is C-terminal binding protein AN, found in Arabidopsis thaliana (Mouse-ear cress).